Here is a 61-residue protein sequence, read N- to C-terminus: MVNLTVGNKNKSFTDQVGGFEWARIQLPESCGNGIFCTNTCYNNKGKRVAPGPVKLKHFWP.

It is found in the mitochondrion. This is an uncharacterized protein from Marchantia polymorpha (Common liverwort).